We begin with the raw amino-acid sequence, 456 residues long: MRAGPRRQHLLPPQDNRAAVGYQRQDPVIPPQRDLDDRETLVSEHEHKEKTCQSAALFNVVNSIIGSGIIDFSLILLIKGGALSGTDTYQSLVNKTFGFPGYILLSVLQFLYPFIAMISYNIIAGDTLSKVFQRIPGVDPENVFIGRHFIIGLSTVTFTLPLSLYRNIAKLGKVSLISTGLTTLILGIVMARAISLGPHIPKTEDAWVFAKPNAIQAVGVMSFAFICHHNSFLVYSSLEEPTVAKWSRLIHMSIVISVFICIFFATCGYLTFTGFTQGDLFENYCRNDDLVTFGRFCYGVTVILTYPMECFVTREVIANVFFGGNLSSVFHIVVTVMVITVATLVSLLIDCLGIVLELNGVLCATPLIFIIPSACYLKLSEEPRTHSDKIMSYVMLPIGAAVMVFGFVMAITNPQDCTHGQEMFYCFPDNFSLTNTSESHIQQTTQLSILNISIFQ.

Positions 1 to 25 are disordered; that stretch reads MRAGPRRQHLLPPQDNRAAVGYQRQ. A helical transmembrane segment spans residues 58-78; sequence FNVVNSIIGSGIIDFSLILLI. Asn-94 carries N-linked (GlcNAc...) asparagine glycosylation. A run of 6 helical transmembrane segments spans residues 98 to 118, 143 to 163, 171 to 191, 206 to 226, 252 to 272, and 291 to 313; these read GFPG…IAMI, VFIG…LPLS, LGKV…IVMA, AWVF…FAFI, MSIV…YLTF, and VTFG…CFVT. Asn-325 is a glycosylation site (N-linked (GlcNAc...) asparagine). Transmembrane regions (helical) follow at residues 329-349, 351-371, and 390-410; these read VFHI…SLLI, CLGI…IFII, and IMSY…FVMA.

This sequence belongs to the amino acid/polyamine transporter 2 family.

Its subcellular location is the membrane. Its function is as follows. Putative sodium-dependent amino acid/proton antiporter. This chain is Putative sodium-coupled neutral amino acid transporter 11 (SLC38A11), found in Macaca fascicularis (Crab-eating macaque).